The chain runs to 559 residues: Protein NRT1/ PTR FAMILY 2.8 (559 aa).

Transmembrane regions (helical) follow at residues glycine 57–alanine 77, leucine 92–leucine 112, lysine 132–valine 152, phenylalanine 178–valine 198, tryptophan 206–isoleucine 226, leucine 321–threonine 341, valine 374–valine 394, leucine 404–phenylalanine 424, glycine 437–leucine 457, valine 481–isoleucine 501, and tyrosine 529–serine 549.

Belongs to the major facilitator superfamily. Proton-dependent oligopeptide transporter (POT/PTR) (TC 2.A.17) family. Expressed in flowers.

Its subcellular location is the membrane. This Arabidopsis thaliana (Mouse-ear cress) protein is Protein NRT1/ PTR FAMILY 2.8 (NPF2.8).